A 591-amino-acid polypeptide reads, in one-letter code: A-type ATP synthase subunit A (591 aa).

Residue 233–240 (GPFGSGKT) participates in ATP binding.

It belongs to the ATPase alpha/beta chains family. Has multiple subunits with at least A(3), B(3), C, D, E, F, H, I and proteolipid K(x).

It is found in the cell membrane. It catalyses the reaction ATP + H2O + 4 H(+)(in) = ADP + phosphate + 5 H(+)(out). Component of the A-type ATP synthase that produces ATP from ADP in the presence of a proton gradient across the membrane. The A chain is the catalytic subunit. The sequence is that of A-type ATP synthase subunit A from Metallosphaera sedula (strain ATCC 51363 / DSM 5348 / JCM 9185 / NBRC 15509 / TH2).